The chain runs to 501 residues: Lysine--tRNA ligase (501 aa).

Residues E411 and E418 each coordinate Mg(2+).

This sequence belongs to the class-II aminoacyl-tRNA synthetase family. As to quaternary structure, homodimer. Mg(2+) is required as a cofactor.

It localises to the cytoplasm. It carries out the reaction tRNA(Lys) + L-lysine + ATP = L-lysyl-tRNA(Lys) + AMP + diphosphate. In Thiobacillus denitrificans (strain ATCC 25259 / T1), this protein is Lysine--tRNA ligase.